We begin with the raw amino-acid sequence, 143 residues long: MKLNIIAVGALTKEYKTLYEIYNKKVSFFSTINLIEIKEVTEPNIELKIKKETKLILEKIPKNSKVFYMSLTGKKMKSEEFASLLCEDNLTFIIGGSNGVEEKYFDNKICFSDLTFPHQLFRVILIEQIYRGFAINNNIKYHK.

S-adenosyl-L-methionine is bound by residues Gly-95 and 111 to 116 (FSDLTF).

Belongs to the RNA methyltransferase RlmH family. As to quaternary structure, homodimer.

Its subcellular location is the cytoplasm. It catalyses the reaction pseudouridine(1915) in 23S rRNA + S-adenosyl-L-methionine = N(3)-methylpseudouridine(1915) in 23S rRNA + S-adenosyl-L-homocysteine + H(+). In terms of biological role, specifically methylates the pseudouridine at position 1915 (m3Psi1915) in 23S rRNA. This is Ribosomal RNA large subunit methyltransferase H from Metamycoplasma arthritidis (strain 158L3-1) (Mycoplasma arthritidis).